The chain runs to 560 residues: Platelet glycoprotein V (560 aa).

Positions 1–16 (MLRGTLLCAVLGLLRA) are cleaved as a signal peptide. Residues 17-50 (QPFPCPPACKCVFRDAAQCSGGDVARISALGLPT) enclose the LRRNT domain. Residues 17–523 (QPFPCPPACK…KGQDHSPFWG (507 aa)) are Extracellular-facing. Residue N51 is glycosylated (N-linked (GlcNAc...) asparagine). LRR repeat units lie at residues 75–96 (VLQR…TFSD), 99–120 (KLKT…LLDK), 123–144 (LLEQ…MFQK), 147–168 (NLQE…LFTN), 171–193 (NLKL…LGAQ), 195–216 (KLER…LLNS), 219–240 (ALTE…AFDR), 243–264 (NLSS…LFLH), 267–288 (NLTL…LFGE), 291–312 (GLQE…AFRN), 340–361 (ELQV…LLRG), 364–385 (KLRQ…LFRN), and 388–409 (SLES…VFGA). N-linked (GlcNAc...) (complex) asparagine glycosylation is present at N181. N243 carries N-linked (GlcNAc...) (complex) asparagine glycosylation. 3 N-linked (GlcNAc...) asparagine glycosylation sites follow: N267, N298, and N312. N-linked (GlcNAc...) asparagine glycosylation occurs at N385. The LRRCT domain occupies 421–474 (NSWRCDCGLGPFLGWLRQHLGLVGGEEPPRCAGPGAHAGLPLWALPGGDAECPG). A disordered region spans residues 469–498 (DAECPGPRGPPPRPAADSSSEAPVHPALAP). Residue N499 is glycosylated (N-linked (GlcNAc...) asparagine). Residues 524-544 (FYFLLLAVQAMITVIIVFAMI) traverse the membrane as a helical segment. The Cytoplasmic portion of the chain corresponds to 545–560 (KIGQLFRKLIRERALG).

In terms of processing, the N-terminus is blocked. In terms of tissue distribution, platelets and megakaryocytes.

It is found in the membrane. Functionally, the GPIb-V-IX complex functions as the vWF receptor and mediates vWF-dependent platelet adhesion to blood vessels. The adhesion of platelets to injured vascular surfaces in the arterial circulation is a critical initiating event in hemostasis. The protein is Platelet glycoprotein V (GP5) of Homo sapiens (Human).